Reading from the N-terminus, the 149-residue chain is MEQLISFFDRSKGKWISQRTTYKLSNKQMNSLQSSIIIKPDQSSSNSQLIASLRWGEISRQIIKNLNNQDFVNGNFKFHLRFTNQFNTKQVVTLCSITDKSLITFKTRYGSTTVDETYWFATDNLRLSTSIIKQCNFCVAVSFCSEIKI.

This sequence belongs to the CpcS/CpeS biliprotein lyase family.

It is found in the plastid. The protein resides in the chloroplast. Might function to covalently attach a chromophore to Cys residue(s) of phycobiliproteins. This chain is Chromophore lyase CpcS/CpeS homolog, found in Porphyra purpurea (Red seaweed).